A 150-amino-acid chain; its full sequence is D-aminoacyl-tRNA deacylase (150 aa).

The Gly-cisPro motif, important for rejection of L-amino acids motif lies at 138–139 (GP).

The protein belongs to the DTD family. Homodimer.

Its subcellular location is the cytoplasm. It carries out the reaction glycyl-tRNA(Ala) + H2O = tRNA(Ala) + glycine + H(+). The enzyme catalyses a D-aminoacyl-tRNA + H2O = a tRNA + a D-alpha-amino acid + H(+). Its function is as follows. An aminoacyl-tRNA editing enzyme that deacylates mischarged D-aminoacyl-tRNAs. Also deacylates mischarged glycyl-tRNA(Ala), protecting cells against glycine mischarging by AlaRS. Acts via tRNA-based rather than protein-based catalysis; rejects L-amino acids rather than detecting D-amino acids in the active site. By recycling D-aminoacyl-tRNA to D-amino acids and free tRNA molecules, this enzyme counteracts the toxicity associated with the formation of D-aminoacyl-tRNA entities in vivo and helps enforce protein L-homochirality. The chain is D-aminoacyl-tRNA deacylase from Christiangramia forsetii (strain DSM 17595 / CGMCC 1.15422 / KT0803) (Gramella forsetii).